Here is a 312-residue protein sequence, read N- to C-terminus: Glycerol-3-phosphate dehydrogenase [NAD(P)+] (312 aa).

Positions 11, 30, 31, and 95 each coordinate NADPH. Residues Lys-95, Gly-123, and Ser-125 each contribute to the sn-glycerol 3-phosphate site. Ala-127 is an NADPH binding site. Residues Lys-177, Asp-230, Ser-240, Arg-241, and Asn-242 each coordinate sn-glycerol 3-phosphate. Lys-177 functions as the Proton acceptor in the catalytic mechanism. Arg-241 contributes to the NADPH binding site. Residues Val-265 and Glu-267 each contribute to the NADPH site.

Belongs to the NAD-dependent glycerol-3-phosphate dehydrogenase family.

The protein resides in the cytoplasm. The enzyme catalyses sn-glycerol 3-phosphate + NAD(+) = dihydroxyacetone phosphate + NADH + H(+). It catalyses the reaction sn-glycerol 3-phosphate + NADP(+) = dihydroxyacetone phosphate + NADPH + H(+). It functions in the pathway membrane lipid metabolism; glycerophospholipid metabolism. Catalyzes the reduction of the glycolytic intermediate dihydroxyacetone phosphate (DHAP) to sn-glycerol 3-phosphate (G3P), the key precursor for phospholipid synthesis. The protein is Glycerol-3-phosphate dehydrogenase [NAD(P)+] of Helicobacter acinonychis (strain Sheeba).